Reading from the N-terminus, the 452-residue chain is Ribosomal protein uS12 methylthiotransferase RimO (452 aa).

In terms of domain architecture, MTTase N-terminal spans 3-118 (GKIGFVSLGC…VMQAIHLHLP (116 aa)). The [4Fe-4S] cluster site is built by cysteine 12, cysteine 48, cysteine 77, cysteine 149, cysteine 153, and cysteine 156. The region spanning 135 to 381 (LTPKHYAYLK…MAKAEDISIK (247 aa)) is the Radical SAM core domain. The TRAM domain occupies 384–452 (AKKIGKRVQV…SQGHDLIAET (69 aa)).

The protein belongs to the methylthiotransferase family. RimO subfamily. The cofactor is [4Fe-4S] cluster.

It localises to the cytoplasm. The catalysed reaction is L-aspartate(89)-[ribosomal protein uS12]-hydrogen + (sulfur carrier)-SH + AH2 + 2 S-adenosyl-L-methionine = 3-methylsulfanyl-L-aspartate(89)-[ribosomal protein uS12]-hydrogen + (sulfur carrier)-H + 5'-deoxyadenosine + L-methionine + A + S-adenosyl-L-homocysteine + 2 H(+). Functionally, catalyzes the methylthiolation of an aspartic acid residue of ribosomal protein uS12. In Polynucleobacter asymbioticus (strain DSM 18221 / CIP 109841 / QLW-P1DMWA-1) (Polynucleobacter necessarius subsp. asymbioticus), this protein is Ribosomal protein uS12 methylthiotransferase RimO.